The primary structure comprises 358 residues: MSACTSFLRVAGDKVNLSFSSNSWRTTSEEKRYDERMANEDPEKTYQSIRRAAEVHRQVRQHARRHIRPGMTMTEIANNIEDGTRALVEEDGLLSGVGFPTGLSLNNCAAHYTPNAGDTTVLQKGDVLKVDIGVHVKGRIADSAFTLTWEPTYNKLLEAVKAATDTGIRESGIDARLGEIAGAIQETMESYEVEVNGTVYPVKPIENLSGHSINPYQIHGGKSILLVKNDDQTKMEEGEYFAIETFGSTGRGRIVESGEVSHYARRMDAPHVPLRLTSAKTLLKSINKNFGTLPFCRRYLDRAGESKYLLALNHLVGQGIVQDYPPLCDQRGSMTAQFEHTILLRPTVKEVVTRGDDY.

H111 contributes to the substrate binding site. A divalent metal cation is bound by residues D131, D142, and H211. H219 serves as a coordination point for substrate. The a divalent metal cation site is built by E244 and E339.

This sequence belongs to the peptidase M24A family. Methionine aminopeptidase eukaryotic type 2 subfamily. It depends on Co(2+) as a cofactor. Zn(2+) is required as a cofactor. Requires Mn(2+) as cofactor. Fe(2+) serves as cofactor.

The protein localises to the cytoplasm. It carries out the reaction Release of N-terminal amino acids, preferentially methionine, from peptides and arylamides.. Cotranslationally removes the N-terminal methionine from nascent proteins. The N-terminal methionine is often cleaved when the second residue in the primary sequence is small and uncharged (Met-Ala-, Cys, Gly, Pro, Ser, Thr, or Val). The polypeptide is Methionine aminopeptidase 2 (Laccaria bicolor (strain S238N-H82 / ATCC MYA-4686) (Bicoloured deceiver)).